Consider the following 408-residue polypeptide: Imidazolonepropionase (408 aa).

Positions 66 and 68 each coordinate Fe(3+). Residues H66 and H68 each coordinate Zn(2+). Residues R75, Y138, and H171 each contribute to the 4-imidazolone-5-propanoate site. Y138 is a binding site for N-formimidoyl-L-glutamate. H236 provides a ligand contact to Fe(3+). H236 contributes to the Zn(2+) binding site. Q239 is a binding site for 4-imidazolone-5-propanoate. Residue D311 coordinates Fe(3+). Position 311 (D311) interacts with Zn(2+). The N-formimidoyl-L-glutamate site is built by N313 and G315. Residue S316 coordinates 4-imidazolone-5-propanoate.

It belongs to the metallo-dependent hydrolases superfamily. HutI family. Zn(2+) is required as a cofactor. Fe(3+) serves as cofactor.

The protein resides in the cytoplasm. The catalysed reaction is 4-imidazolone-5-propanoate + H2O = N-formimidoyl-L-glutamate. It participates in amino-acid degradation; L-histidine degradation into L-glutamate; N-formimidoyl-L-glutamate from L-histidine: step 3/3. In terms of biological role, catalyzes the hydrolytic cleavage of the carbon-nitrogen bond in imidazolone-5-propanoate to yield N-formimidoyl-L-glutamate. It is the third step in the universal histidine degradation pathway. The sequence is that of Imidazolonepropionase from Idiomarina loihiensis (strain ATCC BAA-735 / DSM 15497 / L2-TR).